The chain runs to 331 residues: Phenylalanine--tRNA ligase alpha subunit (331 aa).

E256 contributes to the Mg(2+) binding site.

Belongs to the class-II aminoacyl-tRNA synthetase family. Phe-tRNA synthetase alpha subunit type 1 subfamily. Tetramer of two alpha and two beta subunits. Mg(2+) is required as a cofactor.

It is found in the cytoplasm. It carries out the reaction tRNA(Phe) + L-phenylalanine + ATP = L-phenylalanyl-tRNA(Phe) + AMP + diphosphate + H(+). This chain is Phenylalanine--tRNA ligase alpha subunit, found in Colwellia psychrerythraea (strain 34H / ATCC BAA-681) (Vibrio psychroerythus).